The chain runs to 365 residues: WAT1-related protein At1g01070 (365 aa).

The next 10 helical transmembrane spans lie at 14–34, 46–66, 83–103, 107–127, 139–159, 189–209, 221–241, 255–275, 285–305, and 310–330; these read YSPVIVMVMSNVAMGSVNALV, VIGAYRMAISALILVPFAYVL, FVSGLLGASLMQFFFLLGLSY, TVSCALVSMLPAITFALALIF, AGMLKVIGTLICISGALFLTF, WLLGCLYLTIGTVLLSLWMLF, YSSTCLMSIFAAFQCALLSLY, FVITVIIYAGVVGQAMTTVAT, VFASAFFPLTLISATLFDFLI, and LYLGSVIGSLVTITGLYMFLW. The region spanning 27–157 is the EamA 1 domain; it reads MGSVNALVKK…LICISGALFL (131 aa). The region spanning 223–329 is the EamA 2 domain; sequence STCLMSIFAA…VTITGLYMFL (107 aa). Residues 340-356 show a composition bias toward polar residues; the sequence is TALSSGMDNEAQYTTPN. Residues 340–365 are disordered; it reads TALSSGMDNEAQYTTPNKDNDSKSPV.

This sequence belongs to the drug/metabolite transporter (DMT) superfamily. Plant drug/metabolite exporter (P-DME) (TC 2.A.7.4) family.

The protein resides in the membrane. The polypeptide is WAT1-related protein At1g01070 (Arabidopsis thaliana (Mouse-ear cress)).